The chain runs to 965 residues: UvrABC system protein A (965 aa).

Residue 32–39 participates in ATP binding; sequence GLSGSGKS. The C4-type zinc-finger motif lies at 254 to 281; it reads CPVCDYSLPELEPRLFSFNAPMGACPAC. 2 consecutive ABC transporter domains span residues 311 to 588 and 608 to 937; these read WDRR…PRSL and PNAT…HFLA. ATP is bound at residue 641-648; sequence GVSGSGKS. The C4-type zinc-finger motif lies at 740 to 766; the sequence is CEACEGDGLIKVEMHFLPDVYVPCDIC.

It belongs to the ABC transporter superfamily. UvrA family. As to quaternary structure, forms a heterotetramer with UvrB during the search for lesions.

Its subcellular location is the cytoplasm. In terms of biological role, the UvrABC repair system catalyzes the recognition and processing of DNA lesions. UvrA is an ATPase and a DNA-binding protein. A damage recognition complex composed of 2 UvrA and 2 UvrB subunits scans DNA for abnormalities. When the presence of a lesion has been verified by UvrB, the UvrA molecules dissociate. In Xylella fastidiosa (strain Temecula1 / ATCC 700964), this protein is UvrABC system protein A.